The following is a 330-amino-acid chain: Ketol-acid reductoisomerase (NADP(+)) (330 aa).

The 181-residue stretch at 1 to 181 folds into the KARI N-terminal Rossmann domain; sequence MKVYYEQDAT…GGARSGVIET (181 aa). NADP(+) is bound by residues 24 to 27, arginine 47, and 82 to 85; these read YGSQ and DQVQ. The active site involves histidine 107. Glycine 133 is an NADP(+) binding site. Positions 182 to 327 constitute a KARI C-terminal knotted domain; the sequence is TFKEETETDL…GKLRGMMPWL (146 aa). 4 residues coordinate Mg(2+): aspartate 190, glutamate 194, glutamate 226, and glutamate 230. Position 251 (serine 251) interacts with substrate.

Belongs to the ketol-acid reductoisomerase family. Requires Mg(2+) as cofactor.

It carries out the reaction (2R)-2,3-dihydroxy-3-methylbutanoate + NADP(+) = (2S)-2-acetolactate + NADPH + H(+). The catalysed reaction is (2R,3R)-2,3-dihydroxy-3-methylpentanoate + NADP(+) = (S)-2-ethyl-2-hydroxy-3-oxobutanoate + NADPH + H(+). It participates in amino-acid biosynthesis; L-isoleucine biosynthesis; L-isoleucine from 2-oxobutanoate: step 2/4. It functions in the pathway amino-acid biosynthesis; L-valine biosynthesis; L-valine from pyruvate: step 2/4. Its function is as follows. Involved in the biosynthesis of branched-chain amino acids (BCAA). Catalyzes an alkyl-migration followed by a ketol-acid reduction of (S)-2-acetolactate (S2AL) to yield (R)-2,3-dihydroxy-isovalerate. In the isomerase reaction, S2AL is rearranged via a Mg-dependent methyl migration to produce 3-hydroxy-3-methyl-2-ketobutyrate (HMKB). In the reductase reaction, this 2-ketoacid undergoes a metal-dependent reduction by NADPH to yield (R)-2,3-dihydroxy-isovalerate. This Nitratidesulfovibrio vulgaris (strain DSM 19637 / Miyazaki F) (Desulfovibrio vulgaris) protein is Ketol-acid reductoisomerase (NADP(+)).